Consider the following 79-residue polypeptide: D-alanyl carrier protein (79 aa).

Residues 1–76 (MKEQIFDIIE…KIAARVQEKT (76 aa)) enclose the Carrier domain. Ser-34 is subject to O-(pantetheine 4'-phosphoryl)serine.

Belongs to the DltC family. 4'-phosphopantetheine is transferred from CoA to a specific serine of apo-DCP.

Its subcellular location is the cytoplasm. The protein operates within cell wall biogenesis; lipoteichoic acid biosynthesis. Functionally, carrier protein involved in the D-alanylation of lipoteichoic acid (LTA). The loading of thioester-linked D-alanine onto DltC is catalyzed by D-alanine--D-alanyl carrier protein ligase DltA. The DltC-carried D-alanyl group is further transferred to cell membrane phosphatidylglycerol (PG) by forming an ester bond, probably catalyzed by DltD. D-alanylation of LTA plays an important role in modulating the properties of the cell wall in Gram-positive bacteria, influencing the net charge of the cell wall. This is D-alanyl carrier protein from Lactococcus lactis subsp. cremoris (strain SK11).